A 1120-amino-acid polypeptide reads, in one-letter code: Transcription-repair-coupling factor (1120 aa).

The 166-residue stretch at 591 to 756 (DLSNGMLMDR…MTGLKELSII (166 aa)) folds into the Helicase ATP-binding domain. 604-611 (GDVGFGKT) contacts ATP. The DEEQ box motif lies at 709–712 (DEEQ). The Helicase C-terminal domain occupies 777 to 931 (IIRDALLHEH…GFTIASHDMD (155 aa)).

In the N-terminal section; belongs to the UvrB family. It in the C-terminal section; belongs to the helicase family. RecG subfamily.

The protein localises to the cytoplasm. In terms of biological role, couples transcription and DNA repair by recognizing RNA polymerase (RNAP) stalled at DNA lesions. Mediates ATP-dependent release of RNAP and its truncated transcript from the DNA, and recruitment of nucleotide excision repair machinery to the damaged site. This chain is Transcription-repair-coupling factor, found in Rickettsia bellii (strain RML369-C).